The following is a 257-amino-acid chain: MSGGGVIRGPAGNNDCRIYVGNLPPDIRTKDIEDVFYKYGAIRDIDLKNRRGGPPFAFVEFEDPRDAEDAVYGRDGYDYDGYRLRVEFPRSGRGTGRGGGGGGGGGAPRGRYGPPSRRSEYRVIVSGLPPSGSWQDLKDHMREAGDVCYADVFRDGTGVVEFVRKEDMTYAVRKLDNTKFRSHEGETAYIRVKVDGPRSPSYGRSRSRSVVVAEAVVGATAEAAVIPQEEAEDLHATLPATADPDLVHKRSLALIFL.

N-acetylserine is present on Ser2. An RRM 1 domain is found at 16-91 (CRIYVGNLPP…YRLRVEFPRS (76 aa)). Positions 88–116 (FPRSGRGTGRGGGGGGGGGAPRGRYGPPS) are disordered. Gly residues predominate over residues 93 to 108 (RGTGRGGGGGGGGGAP). Residues 121 to 195 (YRVIVSGLPP…ETAYIRVKVD (75 aa)) form the RRM 2 domain.

It is found in the cytoplasm. The protein resides in the nucleus speckle. Its function is as follows. May play a role in preventing exon skipping, ensuring the accuracy of splicing and regulating alternative splicing. In Gallus gallus (Chicken), this protein is Serine/arginine-rich splicing factor 1 (SRSF1).